The primary structure comprises 223 residues: MDLAALRTQQQQLAASVERADRLDRDPPALIGGADVGFEQEGEITRAAMVLLTWPELELVEYQVARVATSMPYIPGFLSFRETPALLAAWEQLSQKPDLLFVDGHGISHPRRLGVASHFGLMIDVPTIGVAKKRLCGKIGDLGDEPGALAPLMDKNEQLAWVWRSKVRCNPLFISTGHRVGMDSALMWVERCMRGYRLPEPTRWADAVASRRPSFVRWQANHS.

Residues aspartate 35 and aspartate 103 each coordinate Mg(2+).

It belongs to the endonuclease V family. It depends on Mg(2+) as a cofactor.

The protein localises to the cytoplasm. It catalyses the reaction Endonucleolytic cleavage at apurinic or apyrimidinic sites to products with a 5'-phosphate.. Its function is as follows. DNA repair enzyme involved in the repair of deaminated bases. Selectively cleaves double-stranded DNA at the second phosphodiester bond 3' to a deoxyinosine leaving behind the intact lesion on the nicked DNA. In Klebsiella pneumoniae subsp. pneumoniae (strain ATCC 700721 / MGH 78578), this protein is Endonuclease V.